A 681-amino-acid chain; its full sequence is Mitosis inhibitor nif1 (681 aa).

The tract at residues 22–43 (LNKKDGNDDDKAEHSKRSGYHG) is disordered. A compositionally biased stretch (basic and acidic residues) spans 23 to 37 (NKKDGNDDDKAEHSK). S70 carries the post-translational modification Phosphoserine. Disordered stretches follow at residues 80 to 104 (TTSG…SSPF) and 182 to 324 (YYHE…SSRQ). The span at 92–103 (ESPASPAEASSP) shows a compositional bias: low complexity. Over residues 191–203 (TASNTSPTPNSIK) the composition is skewed to polar residues. At S196 the chain carries Phosphoserine. Residues 238 to 278 (SSGDSTPLSGSSSSKGMLMSMSTSENHSLSSNPELSNSNLL) are compositionally biased toward low complexity. Over residues 296–306 (SSKEPDKEHST) the composition is skewed to basic and acidic residues. Sel1-like repeat units follow at residues 547 to 582 (ALIL…AWGD) and 583 to 618 (ADAQ…FQGI).

The protein localises to the cytoplasm. Functions as a negative regulator of mitosis. It interacts with the C-terminal of nim1, thereby inhibiting its kinase activity which phosphorylates wee1. This is Mitosis inhibitor nif1 (nif1) from Schizosaccharomyces pombe (strain 972 / ATCC 24843) (Fission yeast).